A 486-amino-acid polypeptide reads, in one-letter code: Catalase (486 aa).

The tract at residues 1–28 (MENKKLTAANGRPIADNQNSQTAGPRGP) is disordered. Residues histidine 54 and asparagine 127 contribute to the active site. Tyrosine 337 lines the heme pocket.

The protein belongs to the catalase family. Homodimer. Heme is required as a cofactor.

The catalysed reaction is 2 H2O2 = O2 + 2 H2O. Functionally, decomposes hydrogen peroxide into water and oxygen; serves to protect cells from the toxic effects of hydrogen peroxide. May be involved in aerotolerance of B.fragilis. The sequence is that of Catalase (katA) from Bacteroides fragilis (strain YCH46).